The primary structure comprises 125 residues: Small ribosomal subunit protein bS6 (125 aa).

Residues 99–125 (PSIMMKSVEREEARKASTEASAPAQAQ) form a disordered region. The span at 105–115 (SVEREEARKAS) shows a compositional bias: basic and acidic residues. Polar residues predominate over residues 116–125 (TEASAPAQAQ).

Belongs to the bacterial ribosomal protein bS6 family.

In terms of biological role, binds together with bS18 to 16S ribosomal RNA. The sequence is that of Small ribosomal subunit protein bS6 from Bordetella petrii (strain ATCC BAA-461 / DSM 12804 / CCUG 43448).